The chain runs to 68 residues: Beta-defensin 1 (68 aa).

Positions 1 to 21 are cleaved as a signal peptide; it reads MRTSYLLLFTLCLLMSEMASG. Positions 22 to 32 are excised as a propeptide; it reads DNFLTGLGHRS. Cystine bridges form between C37-C66, C44-C59, and C49-C67.

Belongs to the beta-defensin family. In terms of assembly, monomer. Homodimer.

The protein localises to the secreted. It is found in the membrane. In terms of biological role, has bactericidal activity. May act as a ligand for C-C chemokine receptor CCR6. Positively regulates the sperm motility and bactericidal activity in a CCR6-dependent manner. Binds to CCR6 and triggers Ca2+ mobilization in the sperm which is important for its motility. The polypeptide is Beta-defensin 1 (DEFB1) (Presbytis melalophos (Mitred leaf monkey)).